The sequence spans 327 residues: ABC transporter periplasmic-binding protein YphF (327 aa).

Positions methionine 1 to alanine 26 are cleaved as a signal peptide.

It belongs to the bacterial solute-binding protein 2 family.

The protein resides in the periplasm. Its function is as follows. Probably part of the binding-protein-dependent transport system YphDEF. In Escherichia coli (strain K12), this protein is ABC transporter periplasmic-binding protein YphF (yphF).